The chain runs to 149 residues: Large-conductance mechanosensitive channel (149 aa).

The next 2 membrane-spanning stretches (helical) occupy residues 14–34 and 85–105; these read VVDM…VNTL and GLFI…YLLV.

It belongs to the MscL family. Homopentamer.

It localises to the cell inner membrane. In terms of biological role, channel that opens in response to stretch forces in the membrane lipid bilayer. May participate in the regulation of osmotic pressure changes within the cell. The sequence is that of Large-conductance mechanosensitive channel from Chlorobium phaeovibrioides (strain DSM 265 / 1930) (Prosthecochloris vibrioformis (strain DSM 265)).